The primary structure comprises 118 residues: Large ribosomal subunit protein bL19 (118 aa).

The protein belongs to the bacterial ribosomal protein bL19 family.

In terms of biological role, this protein is located at the 30S-50S ribosomal subunit interface and may play a role in the structure and function of the aminoacyl-tRNA binding site. This is Large ribosomal subunit protein bL19 from Helicobacter acinonychis (strain Sheeba).